The chain runs to 269 residues: Histidinol-phosphatase (269 aa).

Belongs to the PHP hydrolase family. HisK subfamily.

The enzyme catalyses L-histidinol phosphate + H2O = L-histidinol + phosphate. It functions in the pathway amino-acid biosynthesis; L-histidine biosynthesis; L-histidine from 5-phospho-alpha-D-ribose 1-diphosphate: step 8/9. The polypeptide is Histidinol-phosphatase (hisK) (Lactococcus lactis subsp. lactis (strain IL1403) (Streptococcus lactis)).